The following is a 231-amino-acid chain: NADH-ubiquinone oxidoreductase chain 4 (231 aa).

Transmembrane regions (helical) follow at residues 1–21 (PIAG…YGII), 34–54 (MFLP…LTCL), 63–85 (IAYS…TPWG), 89–111 (GMTL…NTTY), 118–138 (ILIL…WWLL), and 156–176 (LLIM…LGLS).

This sequence belongs to the complex I subunit 4 family.

Its subcellular location is the mitochondrion membrane. The catalysed reaction is a ubiquinone + NADH + 5 H(+)(in) = a ubiquinol + NAD(+) + 4 H(+)(out). Functionally, core subunit of the mitochondrial membrane respiratory chain NADH dehydrogenase (Complex I) that is believed to belong to the minimal assembly required for catalysis. Complex I functions in the transfer of electrons from NADH to the respiratory chain. The immediate electron acceptor for the enzyme is believed to be ubiquinone. The chain is NADH-ubiquinone oxidoreductase chain 4 (MT-ND4) from Calloselasma rhodostoma (Malayan pit viper).